The following is a 599-amino-acid chain: Pentatricopeptide repeat-containing protein At3g62470, mitochondrial (599 aa).

Residues 1-99 (MAAAPWLHLS…RGFSSGSSNV (99 aa)) constitute a mitochondrion transit peptide. PPR repeat units follow at residues 194–228 (DSRT…GLLT), 230–262 (ETFT…KFKI), 263–293 (GVET…LKER), 297–331 (NMMT…GLKP), 332–366 (DIVA…GPCP), 367–401 (NVRS…GLQP), 402–436 (DAAV…GHPP), 437–471 (DGKT…EIEP), 472–506 (SIHT…GICP), and 507–541 (DDNS…GMKT).

The protein belongs to the PPR family. P subfamily.

It localises to the mitochondrion. The sequence is that of Pentatricopeptide repeat-containing protein At3g62470, mitochondrial from Arabidopsis thaliana (Mouse-ear cress).